Reading from the N-terminus, the 178-residue chain is Translation initiation factor IF-3 (178 aa).

This sequence belongs to the IF-3 family. As to quaternary structure, monomer.

Its subcellular location is the cytoplasm. Its function is as follows. IF-3 binds to the 30S ribosomal subunit and shifts the equilibrium between 70S ribosomes and their 50S and 30S subunits in favor of the free subunits, thus enhancing the availability of 30S subunits on which protein synthesis initiation begins. The chain is Translation initiation factor IF-3 from Macrococcus caseolyticus (strain JCSC5402) (Macrococcoides caseolyticum).